Consider the following 303-residue polypeptide: MLSQINAFLEANQTINVKTNEPLSKYTFTKTGGPADLLALPTSVPEVRQLLVAAKQNQLPITVIGNASNLIVRDDGISGLVIILTAMDQIDVQGTTVVAQAGAGIIQTSEAAYSGSLTGLEFAAGIPGSVGGAVFMNAGAYGGEISDVLTSAEILTQDNEIETLTNDELNFSYRHSLIQENGSIVLSARFEMAKGVAPTIREKMDELNALRAAKQPLEYPSCGSVFKRPVGHFVGPLIQKAGLQGHQIGGAQVSEKHAGFIVNRGGATATDYLTLIAYIQETIWHKFEVRLEPEVRIIGKKSE.

In terms of domain architecture, FAD-binding PCMH-type spans K30–G195. The active site involves R174. The active-site Proton donor is S224. E294 is a catalytic residue.

The protein belongs to the MurB family. The cofactor is FAD.

The protein resides in the cytoplasm. The enzyme catalyses UDP-N-acetyl-alpha-D-muramate + NADP(+) = UDP-N-acetyl-3-O-(1-carboxyvinyl)-alpha-D-glucosamine + NADPH + H(+). It functions in the pathway cell wall biogenesis; peptidoglycan biosynthesis. Its function is as follows. Cell wall formation. The sequence is that of UDP-N-acetylenolpyruvoylglucosamine reductase from Latilactobacillus sakei subsp. sakei (strain 23K) (Lactobacillus sakei subsp. sakei).